We begin with the raw amino-acid sequence, 1134 residues long: DNA damage-binding protein 1 (1134 aa).

It belongs to the DDB1 family. Interacts with cdt-1 and cul-4. As to expression, expressed at high levels in the spermatheca of adult hermaphrodites.

It is found in the cytoplasm. The protein localises to the nucleus. The protein operates within protein modification; protein ubiquitination. In terms of biological role, plays a role in DNA repair. May be a component of an E3 ubiquitin-protein ligase which promotes histone ubiquitination in response to UV irradiation. Histone ubiquitination may be important for subsequent DNA repair. Promotes the degradation of the replication licensing factor cdt-1 during S-phase, thereby preventing rereplication of DNA during a single round of cell division. In Caenorhabditis elegans, this protein is DNA damage-binding protein 1 (ddb-1).